The sequence spans 953 residues: Isoleucine--tRNA ligase (953 aa).

Positions 58 to 68 (PYANGFIHLGH) match the 'HIGH' region motif. Residue Glu-573 participates in L-isoleucyl-5'-AMP binding. The 'KMSKS' region signature appears at 614-618 (KMSKS). Lys-617 provides a ligand contact to ATP. Residues Cys-916, Cys-919, Cys-936, and Cys-939 each contribute to the Zn(2+) site.

This sequence belongs to the class-I aminoacyl-tRNA synthetase family. IleS type 1 subfamily. Monomer. Requires Zn(2+) as cofactor.

It localises to the cytoplasm. The catalysed reaction is tRNA(Ile) + L-isoleucine + ATP = L-isoleucyl-tRNA(Ile) + AMP + diphosphate. Catalyzes the attachment of isoleucine to tRNA(Ile). As IleRS can inadvertently accommodate and process structurally similar amino acids such as valine, to avoid such errors it has two additional distinct tRNA(Ile)-dependent editing activities. One activity is designated as 'pretransfer' editing and involves the hydrolysis of activated Val-AMP. The other activity is designated 'posttransfer' editing and involves deacylation of mischarged Val-tRNA(Ile). In Blochmanniella floridana, this protein is Isoleucine--tRNA ligase.